A 340-amino-acid polypeptide reads, in one-letter code: Latency-related protein 1 (340 aa).

Disordered stretches follow at residues A13–Q96 and R254–P340. Tandem repeats lie at residues P27–P43 and P59–P75. The segment at P27–P75 is 2 X 17 AA repeats. Pro residues predominate over residues H35–R73. Positions A287–G307 are enriched in gly residues. A compositionally biased stretch (basic residues) spans S308–R326.

This is Latency-related protein 1 from Human herpesvirus 1 (strain F) (HHV-1).